Here is a 526-residue protein sequence, read N- to C-terminus: Medium/long-chain-fatty-acid--[acyl-carrier-protein] ligase MbtM (526 aa).

Residues K260 and K511 each carry the N6-acetyllysine; by Pat modification.

Belongs to the ATP-dependent AMP-binding enzyme family. In terms of processing, acetylated on Lys-511 and Lys-260 by Pat. Lys-511 is the major acetylation site. Acetylation results in the inactivation of the enzyme.

It catalyses the reaction a long-chain fatty acid + holo-[ACP] + ATP = a long-chain fatty acyl-[ACP] + AMP + diphosphate. The enzyme catalyses a medium-chain fatty acid + holo-[ACP] + ATP = a medium-chain fatty acyl-[ACP] + AMP + diphosphate. It carries out the reaction hexadecanoate + holo-[ACP] + ATP = hexadecanoyl-[ACP] + AMP + diphosphate. The catalysed reaction is hexadecanoate + ATP + H(+) = hexadecanoyl-AMP + diphosphate. It catalyses the reaction hexadecanoyl-AMP + holo-[ACP] = hexadecanoyl-[ACP] + AMP + H(+). The enzyme catalyses dodecanoate + holo-[ACP] + ATP = dodecanoyl-[ACP] + AMP + diphosphate. It carries out the reaction dodecanoate + ATP + H(+) = dodecanoyl-AMP + diphosphate. The catalysed reaction is dodecanoyl-AMP + holo-[ACP] = dodecanoyl-[ACP] + AMP + H(+). The protein operates within siderophore biosynthesis; mycobactin biosynthesis. With respect to regulation, reversibly inactivated by post-translational acetylation by Pat in a cAMP-dependent manner and reactivated by Sir2 deacylase. Its function is as follows. Activates lipidic moieties required for mycobactin biosynthesis. Converts medium- to long-chain aliphatic fatty acids into acyl adenylate, which is further transferred on to the phosphopantetheine arm of the carrier protein MbtL. Shows a strong preference for palmitic acid (C16) and cannot use short-chain fatty acids. Proceeds via a Bi Uni Uni Bi ping-pong mechanism. During the first half-reaction (adenylation), fatty acid binds first to the free enzyme, followed by ATP and the release of pyrophosphate to form the adenylate intermediate. During the second half-reaction (ligation), holo-MbtL binds to the enzyme followed by the release of products AMP and acylated MbtL. In Mycolicibacterium smegmatis (strain ATCC 700084 / mc(2)155) (Mycobacterium smegmatis), this protein is Medium/long-chain-fatty-acid--[acyl-carrier-protein] ligase MbtM.